Consider the following 210-residue polypeptide: Ribosomal RNA large subunit methyltransferase E (210 aa).

Glycine 61, tryptophan 63, aspartate 81, aspartate 97, and aspartate 122 together coordinate S-adenosyl-L-methionine. Catalysis depends on lysine 162, which acts as the Proton acceptor. A compositionally biased stretch (basic and acidic residues) spans 187 to 196 (KPEASRKRSP). The tract at residues 187–210 (KPEASRKRSPEVYALGQGKRAHMK) is disordered.

Belongs to the class I-like SAM-binding methyltransferase superfamily. RNA methyltransferase RlmE family.

It is found in the cytoplasm. The catalysed reaction is uridine(2552) in 23S rRNA + S-adenosyl-L-methionine = 2'-O-methyluridine(2552) in 23S rRNA + S-adenosyl-L-homocysteine + H(+). In terms of biological role, specifically methylates the uridine in position 2552 of 23S rRNA at the 2'-O position of the ribose in the fully assembled 50S ribosomal subunit. The chain is Ribosomal RNA large subunit methyltransferase E from Stenotrophomonas maltophilia (strain R551-3).